Consider the following 575-residue polypeptide: G protein-coupled receptor kinase 4 (575 aa).

An N-acetylmethionine modification is found at Met-1. Residues 1-153 (MELENFMANT…DCAGVIYKYL (153 aa)) are N-terminal. Residues 51–171 (DFSSLCDQQP…QESTYYNRFL (121 aa)) enclose the RGS domain. The Protein kinase domain occupies 186–448 (FRQYRVLGKG…ASAVKQHPIF (263 aa)). ATP-binding positions include 192–200 (LGKGGFGEV) and Lys-215. Catalysis depends on Asp-311, which acts as the Proton acceptor. The AGC-kinase C-terminal domain occupies 449–514 (KDINFSRLEA…GCVTIPWQNE (66 aa)). Ser-484 carries the post-translational modification Phosphoserine.

The protein belongs to the protein kinase superfamily. AGC Ser/Thr protein kinase family. GPRK subfamily. As to quaternary structure, interacts with DRD3. In terms of processing, palmitoylated. In terms of tissue distribution, isoform GRK4A is expressed in testis. Isoform GRK4B is heterogeneously distributed in the kidney, with 20-fold enrichment in the outer medulla. Has a widespread but low level of expression in tissues other than testis.

Its subcellular location is the cytoplasm. It localises to the cell cortex. It catalyses the reaction [G-protein-coupled receptor] + ATP = [G-protein-coupled receptor]-phosphate + ADP + H(+). With respect to regulation, inhibited by heparin. In terms of biological role, specifically phosphorylates the activated forms of G protein-coupled receptors. Plays an important role in the regulation of renal sodium handling and blood pressure. The protein is G protein-coupled receptor kinase 4 (Grk4) of Rattus norvegicus (Rat).